Reading from the N-terminus, the 571-residue chain is Chondroitin sulfate proteoglycan 5 (571 aa).

The N-terminal stretch at 1-30 is a signal peptide; that stretch reads MGRAGGGGPGWGPPPVLLLLGVTLVLTAGA. Topologically, residues 31–428 are extracellular; it reads VPAREAGSAI…SIITDFQVMC (398 aa). Residue S38 is glycosylated (O-linked (Xyl...) (chondroitin sulfate) serine). N-linked (GlcNAc...) asparagine glycosylation is present at N57. Residues 57-91 form a disordered region; it reads NDTREEAGLPAAGEDETSWTERGSELAAVGPGVGP. The O-linked (GalNAc...) threonine glycan is linked to T76. An O-linked (Xyl...) (chondroitin sulfate) serine glycan is attached at S123. T132 is a glycosylation site (O-linked (GalNAc...) threonine). 3 disordered regions span residues 137–169, 186–254, and 279–357; these read DEALGSSTMPPAIPEATEASGPPSPTLRDKPSL, GGST…TPSW, and DDLE…DLAT. S143 is a glycosylation site (O-linked (GalNAc...) serine). O-linked (GalNAc...) threonine glycans are attached at residues T144 and T153. 2 O-linked (GalNAc...) serine glycosylation sites follow: S156 and S160. O-linked (GalNAc...) threonine glycans are attached at residues T162 and T198. Acidic residues predominate over residues 214–223; it reads IDIDYFEGLD. T240 carries an O-linked (GalNAc...) threonine glycan. The interaction with TNC and TNR stretch occupies residues 270–306; that stretch reads DFYPTTSFYDDLEEEEEEEEDKDAVGGGDLEDESDLL. Acidic residues predominate over residues 279 to 291; the sequence is DDLEEEEEEEEDK. Residues T318 and T322 are each glycosylated (O-linked (GalNAc...) threonine). N372 is a glycosylation site (N-linked (GlcNAc...) asparagine). The 43-residue stretch at 376 to 418 folds into the EGF-like domain; that stretch reads RSVCDLFPSYCHNGGQCYLVENIGAFCRCNTQDYIWHKGMRCE. Cystine bridges form between C379-C392, C386-C402, and C404-C417. A helical transmembrane segment spans residues 429-449; sequence VAVGSAALVLLLLFMMTVFFA. Residues 447-465 form an interaction with GOPC region; the sequence is FFAKKLYLLKTENTKLRRT. Residues 450–571 lie on the Cytoplasmic side of the membrane; it reads KKLYLLKTEN…EVNCLQNNLT (122 aa). Phosphoserine is present on residues S472, S480, S488, and S548. Residues 538–563 are disordered; it reads EESFNIQNSMSPKLEGGKGDQDDLEV.

As to quaternary structure, interacts with ERBB3 and GOPC. Binds TNR and probably TNC. Interacts with MDK; this interaction is independent of the presence of chondroitin sulfate chains and promotes elongation of oligodendroglial precursor-like cells. Post-translationally, N-glycosylated. In terms of processing, O-glycosylated; contains chondroitin sulfate glycans. Part-time proteoglycan, expressed in part as a proteoglycan exhibiting chondroitin sulfate glycans and in part as a non-proteoglycan form. The relative amount of both forms depends on tissues and tissue maturation. Phosphorylated; in intracellular and extracellular parts. In terms of tissue distribution, expressed in cerebral cortex and cerebellum. Expressed in retina (at protein level).

It is found in the cell membrane. Its subcellular location is the synaptic cell membrane. It localises to the endoplasmic reticulum membrane. The protein resides in the golgi apparatus membrane. The protein localises to the cell surface. It is found in the secreted. Its function is as follows. May function as a growth and differentiation factor involved in neuritogenesis. May induce ERBB3 activation. In Rattus norvegicus (Rat), this protein is Chondroitin sulfate proteoglycan 5 (Cspg5).